We begin with the raw amino-acid sequence, 72 residues long: Mitotic-spindle organizing protein 1 (72 aa).

The protein belongs to the MOZART1 family. Part of the gamma-tubulin complex.

It localises to the cytoplasm. Its subcellular location is the cytoskeleton. It is found in the microtubule organizing center. The protein resides in the spindle pole body. Its function is as follows. Required for gamma-tubulin complex recruitment to the microtubule organizing center (MTOC). In Cryptococcus neoformans var. neoformans serotype D (strain B-3501A) (Filobasidiella neoformans), this protein is Mitotic-spindle organizing protein 1.